A 131-amino-acid polypeptide reads, in one-letter code: UPF0344 protein Sca_0577 (131 aa).

The next 4 helical transmembrane spans lie at 1–21 (MLHL…VSYI), 42–62 (LFLV…FATA), 69–89 (LLTL…VTLV), and 99–119 (GLFW…IILP).

The protein belongs to the UPF0344 family.

It is found in the cell membrane. The chain is UPF0344 protein Sca_0577 from Staphylococcus carnosus (strain TM300).